A 269-amino-acid polypeptide reads, in one-letter code: tRNA uridine(34) hydroxylase (269 aa).

The 95-residue stretch at 122–216 folds into the Rhodanese domain; it reads QDPEVVLIDV…YLEAIAPEEN (95 aa). Cysteine 176 (cysteine persulfide intermediate) is an active-site residue.

This sequence belongs to the TrhO family.

The enzyme catalyses uridine(34) in tRNA + AH2 + O2 = 5-hydroxyuridine(34) in tRNA + A + H2O. Catalyzes oxygen-dependent 5-hydroxyuridine (ho5U) modification at position 34 in tRNAs. The chain is tRNA uridine(34) hydroxylase from Synechococcus elongatus (strain ATCC 33912 / PCC 7942 / FACHB-805) (Anacystis nidulans R2).